The chain runs to 295 residues: Host-inducible protein A (295 aa).

A disordered region spans residues 1-20; it reads MHLDRSDSNGGSSRYTLDHE.

The protein belongs to the NopP family.

This Rhizobium fredii (Sinorhizobium fredii) protein is Host-inducible protein A.